We begin with the raw amino-acid sequence, 540 residues long: Thiamine biosynthetic bifunctional enzyme (540 aa).

Residues 1 to 238 (MVFTKEEVDY…LDATRYQFVE (238 aa)) are thiamine-phosphate synthase. Residues 43–47 (QIREK) and Asn75 each bind 4-amino-2-methyl-5-(diphosphooxymethyl)pyrimidine. Asp76 and Asp95 together coordinate Mg(2+). Residue Ser114 coordinates 4-amino-2-methyl-5-(diphosphooxymethyl)pyrimidine. Residue 143–145 (TST) coordinates 2-[(2R,5Z)-2-carboxy-4-methylthiazol-5(2H)-ylidene]ethyl phosphate. A 4-amino-2-methyl-5-(diphosphooxymethyl)pyrimidine-binding site is contributed by Lys146. 2-[(2R,5Z)-2-carboxy-4-methylthiazol-5(2H)-ylidene]ethyl phosphate is bound by residues Gly181 and 209–210 (VS). Residues 239–540 (CELNNTFPTT…KWSASLKKFK (302 aa)) form a hydroxyethylthiazole kinase region. Position 290 (Met290) interacts with 5-(2-hydroxyethyl)-4-methylthiazole. The ATP site is built by Lys365 and Thr415. Ala462 serves as a coordination point for 5-(2-hydroxyethyl)-4-methylthiazole. Cys465 (proton acceptor; for hydroxyethylthiazole kinase activity) is an active-site residue.

It in the N-terminal section; belongs to the thiamine-phosphate synthase family. The protein in the C-terminal section; belongs to the Thz kinase family. In terms of assembly, homooctamer. It depends on Mg(2+) as a cofactor.

The catalysed reaction is 2-[(2R,5Z)-2-carboxy-4-methylthiazol-5(2H)-ylidene]ethyl phosphate + 4-amino-2-methyl-5-(diphosphooxymethyl)pyrimidine + 2 H(+) = thiamine phosphate + CO2 + diphosphate. It carries out the reaction 2-(2-carboxy-4-methylthiazol-5-yl)ethyl phosphate + 4-amino-2-methyl-5-(diphosphooxymethyl)pyrimidine + 2 H(+) = thiamine phosphate + CO2 + diphosphate. The enzyme catalyses 4-methyl-5-(2-phosphooxyethyl)-thiazole + 4-amino-2-methyl-5-(diphosphooxymethyl)pyrimidine + H(+) = thiamine phosphate + diphosphate. It catalyses the reaction 5-(2-hydroxyethyl)-4-methylthiazole + ATP = 4-methyl-5-(2-phosphooxyethyl)-thiazole + ADP + H(+). The protein operates within cofactor biosynthesis; thiamine diphosphate biosynthesis; 4-methyl-5-(2-phosphoethyl)-thiazole from 5-(2-hydroxyethyl)-4-methylthiazole: step 1/1. Its pathway is cofactor biosynthesis; thiamine diphosphate biosynthesis; thiamine phosphate from 4-amino-2-methyl-5-diphosphomethylpyrimidine and 4-methyl-5-(2-phosphoethyl)-thiazole: step 1/1. Functionally, essential for thiamine biosynthesis. The kinase activity is involved in the salvage synthesis of TH-P from the thiazole. Condenses 4-methyl-5-(beta-hydroxyethyl)thiazole monophosphate (THZ-P) and 2-methyl-4-amino-5-hydroxymethyl pyrimidine pyrophosphate (HMP-PP) to form thiamine monophosphate (TMP). The chain is Thiamine biosynthetic bifunctional enzyme (THI6) from Saccharomyces cerevisiae (strain ATCC 204508 / S288c) (Baker's yeast).